A 177-amino-acid chain; its full sequence is Nucleoside triphosphate/diphosphate phosphatase (177 aa).

The Proton donor role is filled by arginine 23. Mg(2+)-binding residues include asparagine 87, aspartate 103, aspartate 105, aspartate 107, aspartate 120, and glutamate 123.

Belongs to the Ntdp family. The cofactor is Mg(2+).

The catalysed reaction is a ribonucleoside 5'-triphosphate + H2O = a ribonucleoside 5'-diphosphate + phosphate + H(+). It carries out the reaction a ribonucleoside 5'-diphosphate + H2O = a ribonucleoside 5'-phosphate + phosphate + H(+). Its function is as follows. Has nucleoside phosphatase activity towards nucleoside triphosphates and nucleoside diphosphates. In Streptococcus pneumoniae serotype 19F (strain G54), this protein is Nucleoside triphosphate/diphosphate phosphatase.